Here is a 338-residue protein sequence, read N- to C-terminus: MYG1 protein YER156C (338 aa).

It belongs to the MYG1 family.

The chain is MYG1 protein YER156C from Saccharomyces cerevisiae (strain ATCC 204508 / S288c) (Baker's yeast).